The chain runs to 212 residues: MAYAYLFKYIIIGDTGVGKSCLLLQFTDKRFQPVHDLTIGVEFGARMITIDGKQIKLQIWDTAGQESFRSITRSYYRGAAGALLVYDITRRDTFNHLTTWLEDARQHSNSNMVIMLIGNKSDLESRREVKKEEGEAFAREHGLIFMETSAKTASNVEEAFINTAKEIYEKIQEGVFDINNEANGIKIGPQHAATNATHAGNQGGQQAGGGCC.

Residue Ala-2 is modified to N-acetylalanine. A required for interaction with PRKCI region spans residues 2-19 (AYAYLFKYIIIGDTGVGK). The GTP site is built by Gly-16, Val-17, Gly-18, Lys-19, Ser-20, Cys-21, and Thr-38. Ser-20 contacts Mg(2+). Positions 37-42 (LTIGVE) match the Switch 1 motif. Residues Thr-38 and Asp-61 each contribute to the Mg(2+) site. The Switch 2 motif lies at 63–72 (AGQESFRSIT). 6 residues coordinate GTP: Gly-64, Asn-119, Lys-120, Asp-122, Ala-150, and Lys-151. Residues Cys-211 and Cys-212 are each lipidated (S-geranylgeranyl cysteine).

The protein belongs to the small GTPase superfamily. Rab family. As to quaternary structure, interacts with PRKCI. Interacts with TRIP11. Interacts (in GTP-bound form) with GARIN1B. Interacts (GTP-bound) with HOPS complex component VPS39; interaction contributes to obtaining a functional HOPS complex that promotes autophagosome-lysosome membrane fusion driven by STX17-SNAP29-VAMP8. May interact with VPS41. Mg(2+) is required as a cofactor. Prenylated. Prenylation is required for association with cellular membranes.

The protein resides in the endoplasmic reticulum-Golgi intermediate compartment membrane. It is found in the melanosome. It localises to the endoplasmic reticulum membrane. The protein localises to the golgi apparatus membrane. Its subcellular location is the cytoplasmic vesicle. The protein resides in the secretory vesicle. It is found in the acrosome. It localises to the autophagosome membrane. It catalyses the reaction GTP + H2O = GDP + phosphate + H(+). With respect to regulation, regulated by guanine nucleotide exchange factors (GEFs) which promote the exchange of bound GDP for free GTP, GTPase activating proteins (GAPs) which increase the GTP hydrolysis activity, and GDP dissociation inhibitors (GDIs) which inhibit the dissociation of the nucleotide from the GTPase. The small GTPases Rab are key regulators of intracellular membrane trafficking, from the formation of transport vesicles to their fusion with membranes. Rabs cycle between active GTP-bound and inactive GDP-bound states. In their active state, drive transport of vesicular carriers from donor organelles to acceptor organelles to regulate the membrane traffic that maintains organelle identity and morphology. RAB2A regulates autophagy by promoting autophagosome-lysosome fusion via recruitment of the HOPS endosomal tethering complex; this process involves autophagosomal RAB2A and lysosomal RAB39A recruitment of HOPS subcomplexes VPS39-VPS11 and VPS41-VPS16-VPS18-VPS33A, respectively, which assemble into a functional complex to mediate membrane tethering and SNAREs-driven membrane fusion. Required for protein transport from the endoplasmic reticulum to the Golgi complex. Regulates the compacted morphology of the Golgi. Together with RAB2B, redundantly required for efficient autophagic flux. The chain is Ras-related protein Rab-2A (RAB2A) from Canis lupus familiaris (Dog).